We begin with the raw amino-acid sequence, 223 residues long: Chalcone--flavanone isomerase 2 (223 aa).

Residues Thr41, Asn106, and Ser183 each contribute to the substrate site.

This sequence belongs to the chalcone isomerase family.

It carries out the reaction a chalcone = a flavanone.. It participates in secondary metabolite biosynthesis; flavonoid biosynthesis. Functionally, catalyzes the intramolecular cyclization of bicyclic chalcones into tricyclic (S)-flavanones. Responsible for the isomerization of 4,2',4',6'-tetrahydroxychalcone (also termed chalcone) into naringenin. This chain is Chalcone--flavanone isomerase 2 (CHI2), found in Arabidopsis thaliana (Mouse-ear cress).